Reading from the N-terminus, the 491-residue chain is Delayed-rectifier potassium channel regulatory subunit KCNS3 (491 aa).

Over 1-182 (MVFGEFFHRP…IRMENPAYCL (182 aa)) the chain is Cytoplasmic. Residues 183 to 204 (SAKLIAISSLSVVLASIVAMCV) traverse the membrane as a helical segment. The Extracellular portion of the chain corresponds to 205–220 (HSMSEFQNEDGEVDDP). Residues 221-243 (VLEGVEIACIAWFTGELAVRLVA) form a helical membrane-spanning segment. Topologically, residues 244–254 (APCQKKFWKNP) are cytoplasmic. A helical membrane pass occupies residues 255 to 275 (LNIIDFVSIIPFYATLAVDTK). The Extracellular segment spans residues 276–285 (EEESEDIENM). A helical; Voltage-sensor transmembrane segment spans residues 286-306 (GKVVQILRLMRIFRILKLARH). Residues 307–321 (SVGLRSLGATLRHSY) are Cytoplasmic-facing. Residues 322–343 (HEVGLLLLFLSVGISIFSVLIY) traverse the membrane as a helical segment. Topologically, residues 344–357 (SVEKDDHTSSLTSI) are extracellular. Positions 358-369 (PICWWWATISMT) form an intramembrane region, helical. Residues 370–375 (TVGYGD) carry the Selectivity filter motif. The stretch at 370–377 (TVGYGDTH) is an intramembrane region. Over 378–384 (PVTLAGK) the chain is Extracellular. A helical transmembrane segment spans residues 385–413 (LIASTCIICGILVVALPITIIFNKFSKYY). The Cytoplasmic segment spans residues 414-491 (QKQKDIDVDQ…TASLENCTAK (78 aa)).

This sequence belongs to the potassium channel family. S (TC 1.A.1.2) subfamily. Kv9.3/KCNS3 sub-subfamily. Heterotetramer with KCNB1. Does not form homomultimers.

The protein localises to the cell membrane. Functionally, potassium channel regulatory subunit that modulates the delayed rectifier potassium channel activity of KCNB1 by namely slowing down the deactivation and inactivation time constants. While it does not form functional channel on its own, it can form functional heterotetrameric channels with KCNB1. The protein is Delayed-rectifier potassium channel regulatory subunit KCNS3 of Oryctolagus cuniculus (Rabbit).